A 527-amino-acid chain; its full sequence is Transcription factor RBF1 (527 aa).

Disordered stretches follow at residues 1–36 (MSSNKNQSDLNIPTNSASLKQKQRQQLGIKSEIGAS), 258–281 (ANLYPNEKDQKRKNKPDEPGHNEE), 328–365 (HHLLQQEQQQQQQQQQQQQQQQQQQQHNANSQAQQQAA), 395–433 (QLSQQQSQQQQLHHIPQQRQRTQSQQSQQQPQQTAHGLD), and 470–527 (TQGN…SGFL). A DNA-binding region spans residues 160–300 (HVRDALTTDE…LRMINPQHNH (141 aa)). Basic and acidic residues predominate over residues 263-281 (NEKDQKRKNKPDEPGHNEE). Composition is skewed to low complexity over residues 332–365 (QQEQQQQQQQQQQQQQQQQQQQHNANSQAQQQAA) and 395–428 (QLSQQQSQQQQLHHIPQQRQRTQSQQSQQQPQQT).

It belongs to the RBF1 family.

It is found in the nucleus. It localises to the chromosome. The protein localises to the telomere. In terms of biological role, transcriptional activator that binds to the RPG box and to telomeres. Involved in the regulation of the transition between yeast and filamentous forms and plays a role in virulence. Induces expression of HWP1, a major hyphal cell protein and virulence factor. This is Transcription factor RBF1 (RBF1) from Candida albicans (Yeast).